The primary structure comprises 795 residues: Toll-like receptor 6 (795 aa).

An N-terminal signal peptide occupies residues 1–27 (MSQDRKPIVGSFHFVCALALIVGSMTP). The Extracellular portion of the chain corresponds to 28-584 (FSNELESMVD…FHMSPLSCDT (557 aa)). The N-linked (GlcNAc...) asparagine glycan is linked to N42. 19 LRR repeats span residues 54 to 77 (TKAL…FLSE), 78 to 101 (LRVL…FNQD), 102 to 125 (LEYL…SLRH), 126 to 150 (LDLS…KLTF), 151 to 175 (LGLS…SCIL), 176 to 199 (LDLV…TTVL), 200 to 223 (HLVF…LGHL), 224 to 250 (QLSN…RGPT), 251 to 278 (LLNV…PRPV), 279 to 308 (EYLN…KSLM), 309 to 337 (IEHV…KMLS), 338 to 361 (ISDT…LNFT), 362 to 388 (QNVF…QRNG), 389 to 414 (LKNF…SLNS), 415 to 437 (LNSH…NLSS), 438 to 457 (NMLT…VLDL), 458 to 478 (HNNR…LQEL), 479 to 500 (NVAS…LSVL), and 501 to 524 (VIDH…IRSL). Residue N114 is glycosylated (N-linked (GlcNAc...) asparagine). The cysteines at positions 117 and 139 are disulfide-linked. N144 is a glycosylation site (N-linked (GlcNAc...) asparagine). N195 and N214 each carry an N-linked (GlcNAc...) asparagine glycan. C235 and C265 form a disulfide bridge. N253 and N285 each carry an N-linked (GlcNAc...) asparagine glycan. Cysteines 348 and 373 form a disulfide. Residue N359 is glycosylated (N-linked (GlcNAc...) asparagine). 2 N-linked (GlcNAc...) asparagine glycosylation sites follow: N401 and N434. The cysteines at positions 424 and 447 are disulfide-linked. An LRRCT domain is found at 525 to 576 (TAGNNPFQCTCELRDFVKNIGWVAREVVEGWPDSYRCDYPESSKGTALRDFH). A helical membrane pass occupies residues 585–605 (VLLTVTIGATMLVLAVTGAFL). Over 606-795 (CLYFDLPWYV…ALVNEDDVKT (190 aa)) the chain is Cytoplasmic. The TIR domain occupies 640–781 (LQFHAFVSYS…LFWANLRASF (142 aa)).

This sequence belongs to the Toll-like receptor family. Homodimer (via cytoplasmic TIR domain). Heterodimer with TLR2 via their respective extracellular domains. Binds MYD88 via their respective TIR domains. Interacts with CD36, following CD36 stimulation by oxLDL or amyloid-beta 42, and forms a heterodimer with TLR4. The trimeric complex is internalized and triggers inflammatory response. LYN kinase activity facilitates TLR4:TLR6 heterodimerization and signal initiation. The heterodimer TLR2:TLR6 interacts with CD14 and CD36 in response to triacylated lipopeptides. In terms of tissue distribution, detected in thymus, spleen, ovary and lung. Expressed in macrohpages.

Its subcellular location is the cell membrane. It is found in the cytoplasmic vesicle. The protein resides in the phagosome membrane. The protein localises to the membrane raft. It localises to the golgi apparatus. Participates in the innate immune response to Gram-positive bacteria and fungi. Specifically recognizes diacylated and, to a lesser extent, triacylated lipopeptides. In response to diacylated lipopeptides, forms the activation cluster TLR2:TLR6:CD14:CD36, this cluster triggers signaling from the cell surface and subsequently is targeted to the Golgi in a lipid-raft dependent pathway. Acts via MYD88 and TRAF6, leading to NF-kappa-B activation, cytokine secretion and the inflammatory response. Recognizes mycoplasmal macrophage-activating lipopeptide-2kD (MALP-2), soluble tuberculosis factor (STF), phenol-soluble modulin (PSM) and B.burgdorferi outer surface protein A lipoprotein (OspA-L) cooperatively with TLR2. In complex with TLR4, promotes sterile inflammation in monocytes/macrophages in response to oxidized low-density lipoprotein (oxLDL) or amyloid-beta 42. In this context, the initial signal is provided by oxLDL- or amyloid-beta 42-binding to CD36. This event induces the formation of a heterodimer of TLR4 and TLR6, which is rapidly internalized and triggers inflammatory response, leading to the NF-kappa-B-dependent production of CXCL1, CXCL2 and CCL9 cytokines, via MYD88 signaling pathway, and CCL5 cytokine, via TICAM1 signaling pathway, as well as IL1B secretion. The chain is Toll-like receptor 6 (Tlr6) from Mus musculus (Mouse).